The following is a 52-amino-acid chain: Light-harvesting protein B-880 alpha chain (52 aa).

Topologically, residues 1–12 (MWKVWLLFDPRR) are cytoplasmic. A helical transmembrane segment spans residues 13–33 (TLVALFTFLFVLALLIHFILL). An a bacteriochlorophyll-binding site is contributed by histidine 29. Over 34-52 (STDRFNWMQGAPTAPAQTS) the chain is Periplasmic.

This sequence belongs to the antenna complex alpha subunit family. As to quaternary structure, the core complex is formed by different alpha and beta chains, binding bacteriochlorophyll molecules, and arranged most probably in tetrameric structures disposed around the reaction center. The non-pigmented gamma chains may constitute additional components.

It is found in the cell inner membrane. Its function is as follows. Antenna complexes are light-harvesting systems, which transfer the excitation energy to the reaction centers. The sequence is that of Light-harvesting protein B-880 alpha chain from Afifella marina (Rhodobium marinum).